We begin with the raw amino-acid sequence, 114 residues long: Cystatin Pr15a (114 aa).

The N-terminal stretch at 1–22 is a signal peptide; it reads MFTVKLLAFMVVAVSLQHLAEA. Residues 29–83 form the Cystatin domain; it reads GCPVEVDPNREDIKKSLAHVMAAKNSPDELVRIIKASTQVVNGIKYKVVFEVKNP.

The protein belongs to the cystatin family. As to expression, expressed by the venom gland (anterior main gland) (at protein level).

Its subcellular location is the secreted. This is Cystatin Pr15a from Platymeris rhadamanthus (Red spot assassin bug).